A 196-amino-acid chain; its full sequence is MSDKATDIANLLAPTVVSLGLELLGVEYLPAPGGATLRLYIDVPLAEQPERIINVDDCERVSREVSAQLDVEDPISGNYTLEVSSPGVDRPLFNLEQFARHQGESAKVTLKLPQDNRRRLQGRIEATDEAAGTITFIVDKTEVVVSADNIDKARIMPDWVALGLAPSKPTGPAPKRPKPNTNSSSNEPAAKKPRAE.

The segment at 163–196 (GLAPSKPTGPAPKRPKPNTNSSSNEPAAKKPRAE) is disordered.

This sequence belongs to the RimP family.

It is found in the cytoplasm. Its function is as follows. Required for maturation of 30S ribosomal subunits. This chain is Ribosome maturation factor RimP, found in Stenotrophomonas maltophilia (strain K279a).